A 290-amino-acid polypeptide reads, in one-letter code: Acetyl-coenzyme A carboxylase carboxyl transferase subunit beta (290 aa).

One can recognise a CoA carboxyltransferase N-terminal domain in the interval 28-290 (VMTKCPQCKK…KGGEEGWWRN (263 aa)). Zn(2+) is bound by residues cysteine 32, cysteine 35, cysteine 51, and cysteine 54. A C4-type zinc finger spans residues 32 to 54 (CPQCKKIMYTKELIKNLRVCLSC).

The protein belongs to the AccD/PCCB family. As to quaternary structure, acetyl-CoA carboxylase is a heterohexamer composed of biotin carboxyl carrier protein (AccB), biotin carboxylase (AccC) and two subunits each of ACCase subunit alpha (AccA) and ACCase subunit beta (AccD). Zn(2+) is required as a cofactor.

The protein localises to the cytoplasm. It catalyses the reaction N(6)-carboxybiotinyl-L-lysyl-[protein] + acetyl-CoA = N(6)-biotinyl-L-lysyl-[protein] + malonyl-CoA. Its pathway is lipid metabolism; malonyl-CoA biosynthesis; malonyl-CoA from acetyl-CoA: step 1/1. Functionally, component of the acetyl coenzyme A carboxylase (ACC) complex. Biotin carboxylase (BC) catalyzes the carboxylation of biotin on its carrier protein (BCCP) and then the CO(2) group is transferred by the transcarboxylase to acetyl-CoA to form malonyl-CoA. This is Acetyl-coenzyme A carboxylase carboxyl transferase subunit beta from Geobacillus kaustophilus (strain HTA426).